A 313-amino-acid polypeptide reads, in one-letter code: Aspartate carbamoyltransferase catalytic subunit (313 aa).

Carbamoyl phosphate-binding residues include arginine 55 and threonine 56. L-aspartate is bound at residue lysine 83. Arginine 105, histidine 138, and glutamine 141 together coordinate carbamoyl phosphate. The L-aspartate site is built by arginine 171 and arginine 225. Carbamoyl phosphate contacts are provided by glycine 266 and proline 267.

It belongs to the aspartate/ornithine carbamoyltransferase superfamily. ATCase family. As to quaternary structure, heterododecamer (2C3:3R2) of six catalytic PyrB chains organized as two trimers (C3), and six regulatory PyrI chains organized as three dimers (R2).

It carries out the reaction carbamoyl phosphate + L-aspartate = N-carbamoyl-L-aspartate + phosphate + H(+). The protein operates within pyrimidine metabolism; UMP biosynthesis via de novo pathway; (S)-dihydroorotate from bicarbonate: step 2/3. Functionally, catalyzes the condensation of carbamoyl phosphate and aspartate to form carbamoyl aspartate and inorganic phosphate, the committed step in the de novo pyrimidine nucleotide biosynthesis pathway. This Corynebacterium diphtheriae (strain ATCC 700971 / NCTC 13129 / Biotype gravis) protein is Aspartate carbamoyltransferase catalytic subunit.